A 349-amino-acid polypeptide reads, in one-letter code: Phosphoribosylformylglycinamidine cyclo-ligase (349 aa).

The protein belongs to the AIR synthase family.

It localises to the cytoplasm. The enzyme catalyses 2-formamido-N(1)-(5-O-phospho-beta-D-ribosyl)acetamidine + ATP = 5-amino-1-(5-phospho-beta-D-ribosyl)imidazole + ADP + phosphate + H(+). The protein operates within purine metabolism; IMP biosynthesis via de novo pathway; 5-amino-1-(5-phospho-D-ribosyl)imidazole from N(2)-formyl-N(1)-(5-phospho-D-ribosyl)glycinamide: step 2/2. The chain is Phosphoribosylformylglycinamidine cyclo-ligase from Psychrobacter cryohalolentis (strain ATCC BAA-1226 / DSM 17306 / VKM B-2378 / K5).